Reading from the N-terminus, the 320-residue chain is Mitochondrial thiamine pyrophosphate carrier (320 aa).

Solcar repeat units follow at residues 13-106 (NTKF…LTEL), 116-202 (REFS…LKHL), and 214-309 (NENL…FCNV). A helical transmembrane segment spans residues 19–39 (AVAGSVSGLVTRALISPFDVI). Ser-51 carries the phosphoserine modification. 4 consecutive transmembrane segments (helical) span residues 87–107 (ILSIGYGAVQFLSFEMLTELV), 122–142 (FVCGGLAACMATLTVHPVDVL), 173–193 (VFYKGLAPTLIAIFPYAGLQF), and 220–240 (LLCGSGAGVISKTLTYPLDLF). A Substrate recognition motif is present at residues 241–246 (KKRLQV). Residues 293–313 (ALSTGFMFFWYEFFCNVFHCM) form a helical membrane-spanning segment.

This sequence belongs to the mitochondrial carrier (TC 2.A.29) family.

The protein localises to the mitochondrion membrane. The catalysed reaction is thiamine phosphate(out) + thiamine diphosphate(in) = thiamine phosphate(in) + thiamine diphosphate(out). In terms of biological role, mitochondrial transporter mediating uptake of thiamine diphosphate into mitochondria. It is not clear if the antiporter activity is affected by the membrane potential or by the proton electrochemical gradient. The polypeptide is Mitochondrial thiamine pyrophosphate carrier (SLC25A19) (Pongo abelii (Sumatran orangutan)).